The primary structure comprises 667 residues: Protein OS-9 (667 aa).

The first 25 residues, 1-25 (MAAETLLSSLLGLLLLGLLLPASLT), serve as a signal peptide directing secretion. Residues 108–230 (APCLLKTKDW…TIRTPRLCPH (123 aa)) enclose the MRH domain. Cys110 and Cys123 are joined by a disulfide. Residues Trp117, Trp118, and Gln130 each contribute to the a mannooligosaccharide derivative site. Asn177 carries N-linked (GlcNAc...) asparagine glycosylation. Intrachain disulfides connect Cys181-Cys216 and Cys196-Cys228. Asp182, Arg188, Glu212, and Tyr218 together coordinate a mannooligosaccharide derivative. Disordered regions lie at residues 284–355 (WSET…NNVQ), 372–452 (LKGG…RDRL), 464–483 (LENI…LKKE), 504–540 (LEEK…PEHR), and 633–667 (AQKE…EFDF). Basic and acidic residues-rich tracts occupy residues 302–311 (TKDDSKDSDF) and 396–412 (PQRE…RQRE). Residues 413 to 429 (MEEEEDEDEDEDEDEDE) show a composition bias toward acidic residues. Residues 430-452 (RQLLGEFEKELEGILLPSDRDRL) show a composition bias toward basic and acidic residues. Over residues 504 to 513 (LEEKQSPELV) the composition is skewed to basic and acidic residues. A compositionally biased stretch (basic residues) spans 514–523 (KKHKKKRVVP). Over residues 633 to 647 (AQKERQRQKELESNY) the composition is skewed to basic and acidic residues.

This sequence belongs to the OS-9 family. As to quaternary structure, component of the HRD1 complex, which comprises at least SYNV1/HRD1, DERL1/2, FAM8A1, HERPUD1/HERP, OS9, SEL1L and UBE2J1. FAM8A1 is stabilized by interaction with SYNV1, which prevents its proteasomal degradation. OS9 and UBE2J1 recruitment to the complex may be mediated by SEL1L. Through this complex, may interact with ERLEC1 and HSPA5. Interacts (via C-terminus) with CPNE6 (via second C2 domain); this interaction occurs in a calcium-dependent manner in vitro. Interacts with CREB3. In terms of processing, intramolecular disulfide bonds. Post-translationally, isoform 1 and isoform 2 are N-glycosylated. Ubiquitously expressed. Found as well in all tumor cell lines analyzed, amplified in sarcomas. Highly expressed in osteosarcoma SJSA-1 and rhabdomyosarcoma Rh30 cell lines. As to expression, isoform 2 is the major isoform detected in all cell types examined.

The protein resides in the endoplasmic reticulum lumen. Its function is as follows. Lectin component of the HRD1 complex, which functions in endoplasmic reticulum (ER) quality control and ER-associated degradation (ERAD). Specifically recognizes and binds improperly folded glycoproteins as well as hyperglycosylated proteins, retain them in the ER, and transfers them to the ubiquitination machinery and promote their degradation. Possible targets include TRPV4 as well as hyperglycosylated HSP90B1. This is Protein OS-9 (OS9) from Homo sapiens (Human).